We begin with the raw amino-acid sequence, 177 residues long: Large ribosomal subunit protein uL6 (177 aa).

This sequence belongs to the universal ribosomal protein uL6 family. In terms of assembly, part of the 50S ribosomal subunit.

This protein binds to the 23S rRNA, and is important in its secondary structure. It is located near the subunit interface in the base of the L7/L12 stalk, and near the tRNA binding site of the peptidyltransferase center. This is Large ribosomal subunit protein uL6 from Bordetella petrii (strain ATCC BAA-461 / DSM 12804 / CCUG 43448).